We begin with the raw amino-acid sequence, 148 residues long: Small ribosomal subunit protein bS6 (148 aa).

Residues 96–148 (HEEGQSAMLTRRDDRRERDGDDRPRRREGGFDRGDRGDRGPRRPRDNEAGEGA) form a disordered region.

It belongs to the bacterial ribosomal protein bS6 family.

Binds together with bS18 to 16S ribosomal RNA. This is Small ribosomal subunit protein bS6 from Brucella abortus biovar 1 (strain 9-941).